Here is a 433-residue protein sequence, read N- to C-terminus: 5-methylthioadenosine/S-adenosylhomocysteine deaminase (433 aa).

Residues histidine 62 and histidine 64 each coordinate Zn(2+). Positions 91, 143, and 183 each coordinate substrate. Histidine 210 lines the Zn(2+) pocket. The substrate site is built by glutamate 213 and aspartate 298. Aspartate 298 lines the Zn(2+) pocket.

This sequence belongs to the metallo-dependent hydrolases superfamily. MTA/SAH deaminase family. Zn(2+) serves as cofactor.

The enzyme catalyses S-adenosyl-L-homocysteine + H2O + H(+) = S-inosyl-L-homocysteine + NH4(+). The catalysed reaction is S-methyl-5'-thioadenosine + H2O + H(+) = S-methyl-5'-thioinosine + NH4(+). Its function is as follows. Catalyzes the deamination of 5-methylthioadenosine and S-adenosyl-L-homocysteine into 5-methylthioinosine and S-inosyl-L-homocysteine, respectively. Is also able to deaminate adenosine. This chain is 5-methylthioadenosine/S-adenosylhomocysteine deaminase, found in Caldanaerobacter subterraneus subsp. tengcongensis (strain DSM 15242 / JCM 11007 / NBRC 100824 / MB4) (Thermoanaerobacter tengcongensis).